We begin with the raw amino-acid sequence, 275 residues long: 2,3,4,5-tetrahydropyridine-2,6-dicarboxylate N-succinyltransferase (275 aa).

2 residues coordinate substrate: arginine 105 and aspartate 142.

It belongs to the transferase hexapeptide repeat family. Homotrimer.

It is found in the cytoplasm. The enzyme catalyses (S)-2,3,4,5-tetrahydrodipicolinate + succinyl-CoA + H2O = (S)-2-succinylamino-6-oxoheptanedioate + CoA. It functions in the pathway amino-acid biosynthesis; L-lysine biosynthesis via DAP pathway; LL-2,6-diaminopimelate from (S)-tetrahydrodipicolinate (succinylase route): step 1/3. The polypeptide is 2,3,4,5-tetrahydropyridine-2,6-dicarboxylate N-succinyltransferase (Pectobacterium atrosepticum (strain SCRI 1043 / ATCC BAA-672) (Erwinia carotovora subsp. atroseptica)).